The following is a 106-amino-acid chain: UPF0145 protein azo0572 (106 aa).

The protein belongs to the UPF0145 family.

The polypeptide is UPF0145 protein azo0572 (Azoarcus sp. (strain BH72)).